Here is a 345-residue protein sequence, read N- to C-terminus: MDQRIIASSSTREDDAADASIRPKRLADYLGQQPVREQMEIYIQAAKARGEAMDHVLIFGPPGLGKTTLSHVIANELGVSLRVTSGPVIEKAGDLAALLTNLQPHDVLFIDEIHRLSPVVEEVLYPAMEDFQIDIMIGDGPAARSIKIDLPPFTLIGATTRAGLLTAPLRDRFGIVQRLEFYSPQELTRIVIRSAAILGIDCTPEGAAEIARRARGTPRIANRLLRRVRDYAQVKAAGHIDLPVAQAAMQMLKVDPEGFDELDRRMLRTIVEHFDGGPVGVESLAASLSEERGTLEDVIEPYLIQQGFLIRTARGRMVTTKAYLHLGLKPPRDRAPGIGEPGDLF.

The tract at residues 1–182 (MDQRIIASSS…FGIVQRLEFY (182 aa)) is large ATPase domain (RuvB-L). Residues I21, R22, G63, K66, T67, T68, 129-131 (EDF), R172, Y182, and R219 each bind ATP. A Mg(2+)-binding site is contributed by T67. A small ATPAse domain (RuvB-S) region spans residues 183-253 (SPQELTRIVI…VAQAAMQMLK (71 aa)). Residues 256 to 345 (PEGFDELDRR…PGIGEPGDLF (90 aa)) are head domain (RuvB-H). R292, R311, and R316 together coordinate DNA.

This sequence belongs to the RuvB family. As to quaternary structure, homohexamer. Forms an RuvA(8)-RuvB(12)-Holliday junction (HJ) complex. HJ DNA is sandwiched between 2 RuvA tetramers; dsDNA enters through RuvA and exits via RuvB. An RuvB hexamer assembles on each DNA strand where it exits the tetramer. Each RuvB hexamer is contacted by two RuvA subunits (via domain III) on 2 adjacent RuvB subunits; this complex drives branch migration. In the full resolvosome a probable DNA-RuvA(4)-RuvB(12)-RuvC(2) complex forms which resolves the HJ.

The protein localises to the cytoplasm. The enzyme catalyses ATP + H2O = ADP + phosphate + H(+). Functionally, the RuvA-RuvB-RuvC complex processes Holliday junction (HJ) DNA during genetic recombination and DNA repair, while the RuvA-RuvB complex plays an important role in the rescue of blocked DNA replication forks via replication fork reversal (RFR). RuvA specifically binds to HJ cruciform DNA, conferring on it an open structure. The RuvB hexamer acts as an ATP-dependent pump, pulling dsDNA into and through the RuvAB complex. RuvB forms 2 homohexamers on either side of HJ DNA bound by 1 or 2 RuvA tetramers; 4 subunits per hexamer contact DNA at a time. Coordinated motions by a converter formed by DNA-disengaged RuvB subunits stimulates ATP hydrolysis and nucleotide exchange. Immobilization of the converter enables RuvB to convert the ATP-contained energy into a lever motion, pulling 2 nucleotides of DNA out of the RuvA tetramer per ATP hydrolyzed, thus driving DNA branch migration. The RuvB motors rotate together with the DNA substrate, which together with the progressing nucleotide cycle form the mechanistic basis for DNA recombination by continuous HJ branch migration. Branch migration allows RuvC to scan DNA until it finds its consensus sequence, where it cleaves and resolves cruciform DNA. In Xanthomonas oryzae pv. oryzae (strain MAFF 311018), this protein is Holliday junction branch migration complex subunit RuvB.